The following is a 418-amino-acid chain: CinA-like protein (418 aa).

The protein belongs to the CinA family.

The polypeptide is CinA-like protein (Cyanothece sp. (strain PCC 7425 / ATCC 29141)).